Reading from the N-terminus, the 260-residue chain is Flap endonuclease Xni (260 aa).

Asp-112 contacts Mg(2+). A 5'-3' exonuclease domain is found at 168–258; sequence LQPSQLVDFW…FNLKDLRYTP (91 aa). The K(+) site is built by Leu-179, Val-190, and Ile-193. An interaction with DNA region spans residues 192–197; sequence GIGEKT.

Belongs to the Xni family. Mg(2+) serves as cofactor. Requires K(+) as cofactor.

Its function is as follows. Has flap endonuclease activity. During DNA replication, flap endonucleases cleave the 5'-overhanging flap structure that is generated by displacement synthesis when DNA polymerase encounters the 5'-end of a downstream Okazaki fragment. The polypeptide is Flap endonuclease Xni (Tolumonas auensis (strain DSM 9187 / NBRC 110442 / TA 4)).